A 182-amino-acid chain; its full sequence is T-cell surface glycoprotein CD3 gamma chain (182 aa).

The signal sequence occupies residues Met-1–Ala-22. An Ig-like domain is found at Gln-23 to Gln-98. Residues Gln-23–Ser-116 are Extracellular-facing. Cys-46 and Cys-87 are oxidised to a cystine. The N-linked (GlcNAc...) asparagine glycan is linked to Asn-66. Residues Gly-117–Ala-137 traverse the membrane as a helical segment. Residues Gly-138–Asn-182 are Cytoplasmic-facing. Ser-145 bears the Phosphoserine mark. A Phosphoserine; by PKC modification is found at Ser-148. Residues Asp-149–Asn-177 form the ITAM domain. The short motif at Leu-153–Leu-154 is the Di-leucine motif element.

The TCR-CD3 complex is composed of a CD3D/CD3E and a CD3G/CD3E heterodimers that preferentially associate with TCRalpha and TCRbeta, respectively, to form TCRalpha/CD3E/CD3G and TCRbeta/CD3G/CD3E trimers. In turn, the hexamer interacts with CD3Z homodimer to form the TCR-CD3 complex. Alternatively, TCRalpha and TCRbeta can be replaced by TCRgamma and TCRdelta. Post-translationally, phosphorylated on Tyr residues after T-cell receptor triggering by LCK in association with CD4/CD8. Phosphorylated also by PKC; leading to the TCR complex down-regulation. In terms of processing, phosphorylated on Tyr residues after T-cell receptor triggering by LCK in association with CD4/CD8.

The protein localises to the cell membrane. In terms of biological role, part of the TCR-CD3 complex present on T-lymphocyte cell surface that plays an essential role in adaptive immune response. When antigen presenting cells (APCs) activate T-cell receptor (TCR), TCR-mediated signals are transmitted across the cell membrane by the CD3 chains CD3D, CD3E, CD3G and CD3Z. All CD3 chains contain immunoreceptor tyrosine-based activation motifs (ITAMs) in their cytoplasmic domain. Upon TCR engagement, these motifs become phosphorylated by Src family protein tyrosine kinases LCK and FYN, resulting in the activation of downstream signaling pathways. In addition to this role of signal transduction in T-cell activation, CD3G plays an essential role in the dynamic regulation of TCR expression at the cell surface. Indeed, constitutive TCR cycling is dependent on the di-leucine-based (diL) receptor-sorting motif present in CD3G. The protein is T-cell surface glycoprotein CD3 gamma chain (CD3G) of Sus scrofa (Pig).